Here is a 228-residue protein sequence, read N- to C-terminus: Leucyl/phenylalanyl-tRNA--protein transferase (228 aa).

This sequence belongs to the L/F-transferase family.

It localises to the cytoplasm. It carries out the reaction N-terminal L-lysyl-[protein] + L-leucyl-tRNA(Leu) = N-terminal L-leucyl-L-lysyl-[protein] + tRNA(Leu) + H(+). It catalyses the reaction N-terminal L-arginyl-[protein] + L-leucyl-tRNA(Leu) = N-terminal L-leucyl-L-arginyl-[protein] + tRNA(Leu) + H(+). The catalysed reaction is L-phenylalanyl-tRNA(Phe) + an N-terminal L-alpha-aminoacyl-[protein] = an N-terminal L-phenylalanyl-L-alpha-aminoacyl-[protein] + tRNA(Phe). Its function is as follows. Functions in the N-end rule pathway of protein degradation where it conjugates Leu, Phe and, less efficiently, Met from aminoacyl-tRNAs to the N-termini of proteins containing an N-terminal arginine or lysine. In Sulfurimonas denitrificans (strain ATCC 33889 / DSM 1251) (Thiomicrospira denitrificans (strain ATCC 33889 / DSM 1251)), this protein is Leucyl/phenylalanyl-tRNA--protein transferase.